The primary structure comprises 267 residues: MEKIVAKKKFGQNFLKDESVLQKIIEAMPNNDNKIVEIGPGLGDLTKFLVDVKSVDAFEVDTDLCKVLQNKFEREIATKQLRIHCGDVLTAWKSELIEESYDLVANLPYYIATNIILKALADPKCKNILVMVQLEVAEKFCANDGDKVFGSLSIITQSVGEAHIVVNVPPSAFEPQPKINSAVFLIQKKSDRSDKDFEDMLRVAFTQPRKTLMKNLSSTYDKAMLQEIFEKLSLAQTIRPHQVSTNDYHQLYKLARSLDGTRERTEC.

Positions 13, 15, 39, 59, 87, and 106 each coordinate S-adenosyl-L-methionine.

This sequence belongs to the class I-like SAM-binding methyltransferase superfamily. rRNA adenine N(6)-methyltransferase family. RsmA subfamily.

It is found in the cytoplasm. It catalyses the reaction adenosine(1518)/adenosine(1519) in 16S rRNA + 4 S-adenosyl-L-methionine = N(6)-dimethyladenosine(1518)/N(6)-dimethyladenosine(1519) in 16S rRNA + 4 S-adenosyl-L-homocysteine + 4 H(+). Its function is as follows. Specifically dimethylates two adjacent adenosines (A1518 and A1519) in the loop of a conserved hairpin near the 3'-end of 16S rRNA in the 30S particle. May play a critical role in biogenesis of 30S subunits. This Sulfurimonas denitrificans (strain ATCC 33889 / DSM 1251) (Thiomicrospira denitrificans (strain ATCC 33889 / DSM 1251)) protein is Ribosomal RNA small subunit methyltransferase A.